A 761-amino-acid chain; its full sequence is Zinc finger protein 287 (761 aa).

The SCAN box domain occupies 49–131 (RQNFRNFPYP…TLVEDLTQIL (83 aa)). The disordered stretch occupies residues 134 to 154 (EAPQNSTLSQDTPEEDPRGKH). Positions 170 to 238 (MTFKDVAVDI…IKEILEGPSP (69 aa)) constitute a KRAB domain. C2H2-type zinc fingers lie at residues 368-390 (YKCN…QSTH), 396-418 (YECE…QRMH), 424-446 (YECH…QRIH), 452-474 (YKCD…QRTH), 480-502 (YKCL…QRVH), 508-530 (YICN…QKIH), 536-558 (YKCN…QRIH), 564-586 (YKCN…QTTH), 592-614 (YICN…HRTH), 620-642 (YKCS…QRIH), 648-670 (FKCN…QRIH), 676-698 (YKCN…QRTH), 704-726 (YKCN…QRIH), and 732-754 (YACR…QRVH).

This sequence belongs to the krueppel C2H2-type zinc-finger protein family.

It is found in the nucleus. In terms of biological role, may be involved in transcriptional regulation. The chain is Zinc finger protein 287 from Pongo pygmaeus (Bornean orangutan).